The following is a 274-amino-acid chain: Carbonic anhydrase (274 aa).

The Zn(2+) site is built by C39, H98, and C101. The tract at residues 214-274 is disordered; sequence EDEYAPHPNS…QAERIYRGSR (61 aa). Basic and acidic residues-rich tracts occupy residues 234–245 and 261–274; these read PGKERPGREKAT and LPRE…RGSR.

Belongs to the beta-class carbonic anhydrase family. In terms of assembly, a hexamer formed by a trimer of dimers. Interacts with the first 260 residues of CcmM; both the N-terminal 206 residues and the C-terminal tail contribute to CcmM binding. Interacts with full-length and the N-terminal 249 residues of CcmM. A probable CcmM-CcaA-CcmN complex as well as a CcaA-RuBisCO-CcmM complex can also be isolated. It depends on Zn(2+) as a cofactor.

Its subcellular location is the carboxysome. It catalyses the reaction hydrogencarbonate + H(+) = CO2 + H2O. Its activity is regulated as follows. Inhibited by ethoxyzolamide. Reversible hydration of carbon dioxide. Essential to photosynthetic carbon dioxide fixation, supplies CO(2) to RuBisCO (ribulose bisphosphate carboxylase, rbcL-rbcS) in the carboxysome. This chain is Carbonic anhydrase, found in Synechocystis sp. (strain ATCC 27184 / PCC 6803 / Kazusa).